The following is a 289-amino-acid chain: ATP synthase gamma chain (289 aa).

This sequence belongs to the ATPase gamma chain family. In terms of assembly, F-type ATPases have 2 components, CF(1) - the catalytic core - and CF(0) - the membrane proton channel. CF(1) has five subunits: alpha(3), beta(3), gamma(1), delta(1), epsilon(1). CF(0) has three main subunits: a, b and c.

The protein localises to the cell membrane. In terms of biological role, produces ATP from ADP in the presence of a proton gradient across the membrane. The gamma chain is believed to be important in regulating ATPase activity and the flow of protons through the CF(0) complex. In Lactococcus lactis subsp. cremoris (strain MG1363), this protein is ATP synthase gamma chain.